Consider the following 620-residue polypeptide: Chaperone protein HscA homolog (620 aa).

Belongs to the heat shock protein 70 family.

Its function is as follows. Chaperone involved in the maturation of iron-sulfur cluster-containing proteins. Has a low intrinsic ATPase activity which is markedly stimulated by HscB. The protein is Chaperone protein HscA homolog of Shewanella sp. (strain MR-4).